A 218-amino-acid polypeptide reads, in one-letter code: MSNSSSVYDWFQERLEIQDITDDVTSKYVPPHVNIFYCLGGITLVCFLIQFATGFAMTFYYKPTVTQAYNSVSYLMTDVSFGWLIRSVHRWSASMMVLMLILHVFRVYLTGGFKRPRELTWVTGVVMAVITVAFGVTGYSLPWDQVGYWAVKIVSGVPAAIPIIGDFMVELLRGGESVGQSTLTRFYSLHTFVLPWSLAVFMLMHFLMIRKQGISGPL.

A helical membrane pass occupies residues 35–55 (IFYCLGGITLVCFLIQFATGF). Cys-38 provides a ligand contact to heme c. Heme b contacts are provided by His-89 and His-103. 3 helical membrane passes run 93 to 113 (ASMMVLMLILHVFRVYLTGGF), 119 to 139 (LTWVTGVVMAVITVAFGVTGY), and 189 to 209 (LHTFVLPWSLAVFMLMHFLMI). Heme b-binding residues include His-190 and His-205.

This sequence belongs to the cytochrome b family. PetB subfamily. In terms of assembly, the 4 large subunits of the cytochrome b6-f complex are cytochrome b6, subunit IV (17 kDa polypeptide, PetD), cytochrome f and the Rieske protein, while the 4 small subunits are PetG, PetL, PetM and PetN. The complex functions as a dimer. Requires heme b as cofactor. The cofactor is heme c.

The protein resides in the cellular thylakoid membrane. In terms of biological role, component of the cytochrome b6-f complex, which mediates electron transfer between photosystem II (PSII) and photosystem I (PSI), cyclic electron flow around PSI, and state transitions. In Prochlorococcus marinus (strain MIT 9515), this protein is Cytochrome b6.